The primary structure comprises 265 residues: H-2 class II histocompatibility antigen, A-Q beta chain (265 aa).

The first 27 residues, 1 to 27 (MALQIPSLLLSAAVVVLMVLSSPRTEG), serve as a signal peptide directing secretion. Residues 28–122 (GNSERHFVAQ…VETHTSLRRL (95 aa)) form a beta-1 region. Residues 28–227 (GNSERHFVAQ…AQSESARSKM (200 aa)) are Extracellular-facing. Intrachain disulfides connect Cys42–Cys106 and Cys145–Cys201. The N-linked (GlcNAc...) asparagine glycan is linked to Asn46. The interval 123 to 217 (EQPNVAISLS…LKSPITVEWR (95 aa)) is beta-2. The Ig-like C1-type domain occupies 125–213 (PNVAISLSRT…EHPSLKSPIT (89 aa)). Residues 218 to 227 (AQSESARSKM) are connecting peptide. A helical transmembrane segment spans residues 228-247 (LSGIGGCVLGVIFLGLGLFI). Topologically, residues 248–265 (RHRSQKGPRGPPPAGLLQ) are cytoplasmic.

This sequence belongs to the MHC class II family. Post-translationally, ubiquitinated in immature dendritic cells leading to down-regulation of MHC class II.

The protein resides in the membrane. The sequence is that of H-2 class II histocompatibility antigen, A-Q beta chain (H2-Ab1) from Mus musculus (Mouse).